A 124-amino-acid chain; its full sequence is Nascent polypeptide-associated complex protein (124 aa).

The NAC-A/B domain maps to 7-74; sequence GLNPRKMKQM…PESRERGDSG (68 aa). The tract at residues 53–124 is disordered; that stretch reads AQGQQTYQVV…DLAAAVQKLE (72 aa). A compositionally biased stretch (acidic residues) spans 74 to 93; sequence GSEDDSETESGGEFSEDDVE.

Belongs to the NAC-alpha family. Homodimer. Interacts with the ribosome. Binds ribosomal RNA.

Functionally, contacts the emerging nascent chain on the ribosome. The chain is Nascent polypeptide-associated complex protein from Natronomonas pharaonis (strain ATCC 35678 / DSM 2160 / CIP 103997 / JCM 8858 / NBRC 14720 / NCIMB 2260 / Gabara) (Halobacterium pharaonis).